Here is a 614-residue protein sequence, read N- to C-terminus: Translation initiation factor IF-2 (614 aa).

Residues 115-283 (ARAPIVTIMG…ILLIAELNDY (169 aa)) form the tr-type G domain. Residues 124–131 (GHVDHGKT) are G1. GTP is bound at residue 124–131 (GHVDHGKT). The tract at residues 149-153 (GITQH) is G2. The segment at 170–173 (DTPG) is G3. Residues 170-174 (DTPGH) and 224-227 (NKMD) contribute to the GTP site. The interval 224–227 (NKMD) is G4. The tract at residues 260–262 (SAL) is G5.

Belongs to the TRAFAC class translation factor GTPase superfamily. Classic translation factor GTPase family. IF-2 subfamily.

The protein resides in the cytoplasm. One of the essential components for the initiation of protein synthesis. Protects formylmethionyl-tRNA from spontaneous hydrolysis and promotes its binding to the 30S ribosomal subunits. Also involved in the hydrolysis of GTP during the formation of the 70S ribosomal complex. The chain is Translation initiation factor IF-2 from Ureaplasma urealyticum serovar 10 (strain ATCC 33699 / Western).